The following is a 320-amino-acid chain: MLYQLLHTVLSVVGVSLNAFMMYLALTKSPKIMLPCSAIITIKTFTDILTSAMSFFVMQRIVTDGSSILVIPTGPCTHLGPTACYIGHMFMLCFLECNLIWMISSYIFRYYILYVRDPSIKSLVFVAICLSIPSFIHMATWISNYDPTVAIAIPENVGIESRDMVLGGTIVTWSALTLIIQLFITSILVLIAYAWIRNTLLSFAVKMGSDKNDVKKLNTRLVKVINFQVFLPSFIFLGVFVFVGMFTQLIDPKISQYLVSVIFMFSPICSPFSYILFVPHYLNVILGNKKVSEAKSTTEGCTFRHVNMAASTSNTPECSA.

7 consecutive transmembrane segments (helical) span residues 5–25 (LLHT…MYLA), 38–58 (AIIT…FFVM), 83–103 (ACYI…IWMI), 122–142 (SLVF…ATWI), 176–196 (LTLI…YAWI), 230–250 (FLPS…TQLI), and 258–278 (LVSV…ILFV).

The protein belongs to the nematode receptor-like protein srd family.

It localises to the membrane. This Caenorhabditis elegans protein is Serpentine receptor class delta-28 (srd-28).